Here is an 865-residue protein sequence, read N- to C-terminus: Protein translocase subunit SecA (865 aa).

ATP is bound by residues Q93, G111 to T115, and D501. Positions 841, 843, 852, and 853 each coordinate Zn(2+).

This sequence belongs to the SecA family. As to quaternary structure, monomer and homodimer. Part of the essential Sec protein translocation apparatus which comprises SecA, SecYEG and auxiliary proteins SecDF-YajC and YidC. The cofactor is Zn(2+).

The protein resides in the cell inner membrane. Its subcellular location is the cytoplasm. The enzyme catalyses ATP + H2O + cellular proteinSide 1 = ADP + phosphate + cellular proteinSide 2.. Part of the Sec protein translocase complex. Interacts with the SecYEG preprotein conducting channel. Has a central role in coupling the hydrolysis of ATP to the transfer of proteins into and across the cell membrane, serving as an ATP-driven molecular motor driving the stepwise translocation of polypeptide chains across the membrane. The polypeptide is Protein translocase subunit SecA (Helicobacter pylori (strain HPAG1)).